A 153-amino-acid chain; its full sequence is Nitrogen regulatory protein (153 aa).

Positions 5–148 (DLVAPEAILP…QAIYSVLALP (144 aa)) constitute a PTS EIIA type-2 domain. His66 (tele-phosphohistidine intermediate) is an active-site residue.

It localises to the cytoplasm. Functionally, seems to have a role in regulating nitrogen assimilation. This chain is Nitrogen regulatory protein (ptsN), found in Bradyrhizobium diazoefficiens (strain JCM 10833 / BCRC 13528 / IAM 13628 / NBRC 14792 / USDA 110).